Reading from the N-terminus, the 437-residue chain is Chromosomal replication initiator protein DnaA (437 aa).

Residues 1–67 (MKNKIIASLK…KVVKDILGKD (67 aa)) are domain I, interacts with DnaA modulators. The tract at residues 67-97 (DATYEITFKEIPYETKVESGPLIKKRPLLIT) is domain II. A domain III, AAA+ region region spans residues 98–313 (PLNPKYTFEN…GAILRLIAYR (216 aa)). ATP-binding residues include G141, G143, K144, and T145. Residues 314–437 (NLYGTLNLSI…SKGFAQGESM (124 aa)) are domain IV, binds dsDNA.

The protein belongs to the DnaA family. Oligomerizes as a right-handed, spiral filament on DNA at oriC.

Its subcellular location is the cytoplasm. Functionally, plays an essential role in the initiation and regulation of chromosomal replication. ATP-DnaA binds to the origin of replication (oriC) to initiate formation of the DNA replication initiation complex once per cell cycle. Binds the DnaA box (a 9 base pair repeat at the origin) and separates the double-stranded (ds)DNA. Forms a right-handed helical filament on oriC DNA; dsDNA binds to the exterior of the filament while single-stranded (ss)DNA is stabiized in the filament's interior. The ATP-DnaA-oriC complex binds and stabilizes one strand of the AT-rich DNA unwinding element (DUE), permitting loading of DNA polymerase. After initiation quickly degrades to an ADP-DnaA complex that is not apt for DNA replication. Binds acidic phospholipids. The protein is Chromosomal replication initiator protein DnaA of Thermosipho melanesiensis (strain DSM 12029 / CIP 104789 / BI429).